Here is a 474-residue protein sequence, read N- to C-terminus: Salutaridinol 7-O-acetyltransferase (474 aa).

The Proton acceptor role is filled by His-163. The tract at residues 213–234 is disordered; that stretch reads ERLTSPSGMSEIPFSSTPEDTE. A compositionally biased stretch (polar residues) spans 214–230; the sequence is RLTSPSGMSEIPFSSTP. The active-site Proton acceptor is the Asp-416.

The protein belongs to the plant acyltransferase family. As to expression, expressed in root, stem, leaf and capsule of the mature plant. Restricted to sieve elements of the phloem adjacent or proximal to laticifers.

It carries out the reaction (7S)-salutaridinol + acetyl-CoA = (7S)-O-acetylsalutaridinol + CoA. It participates in alkaloid biosynthesis; morphine biosynthesis. Functionally, acetyltransferase involved in biosynthesis of morphinan-type benzylisoquinoline and opiate alkaloids natural products. Catalyzes the conversion of the phenanthrene alkaloid salutaridinol to salutaridinol-7-O-acetate, the immediate precursor of thebaine along the morphine biosynthetic pathway. Conversion of 7-O-acetylsalutaridinol into thebaine is spontaneous. The chain is Salutaridinol 7-O-acetyltransferase from Papaver somniferum (Opium poppy).